A 103-amino-acid chain; its full sequence is Endoribonuclease MazF3 (103 aa).

Belongs to the PemK/MazF family. In terms of assembly, forms a complex with cognate antitoxin MazE3.

Its function is as follows. Toxic component of a type II toxin-antitoxin (TA) system. Acts as an endoribonuclease, cleaving in U-rich regions. Neutralized by cognate antitoxin MazE3. The polypeptide is Endoribonuclease MazF3 (mazF3) (Mycobacterium tuberculosis (strain CDC 1551 / Oshkosh)).